The primary structure comprises 161 residues: Dihydrofolate reductase (161 aa).

The 160-residue stretch at 2–161 (KISLISAISN…YNFCFEILSR (160 aa)) folds into the DHFR domain. 6-8 (ISA) provides a ligand contact to substrate. NADP(+) contacts are provided by residues 7 to 8 (SA) and 15 to 20 (IGHNNK). Asp-28 serves as a coordination point for substrate. Residue 44 to 47 (GRLT) participates in NADP(+) binding. Arg-59 provides a ligand contact to substrate. NADP(+)-binding positions include 64-66 (ISH) and 96-101 (IGGSKI). Position 115 (Thr-115) interacts with substrate.

The protein belongs to the dihydrofolate reductase family.

It carries out the reaction (6S)-5,6,7,8-tetrahydrofolate + NADP(+) = 7,8-dihydrofolate + NADPH + H(+). It functions in the pathway cofactor biosynthesis; tetrahydrofolate biosynthesis; 5,6,7,8-tetrahydrofolate from 7,8-dihydrofolate: step 1/1. Its function is as follows. Key enzyme in folate metabolism. Catalyzes an essential reaction for de novo glycine and purine synthesis, and for DNA precursor synthesis. The protein is Dihydrofolate reductase (folA) of Buchnera aphidicola subsp. Schizaphis graminum (strain Sg).